The following is a 22-amino-acid chain: Melittin-related peptide FQ-22-1 (22 aa).

The residue at position 22 (glutamine 22) is a Glutamine amide.

As to expression, expressed by the skin glands.

The protein localises to the secreted. The polypeptide is Melittin-related peptide FQ-22-1 (Rana arvalis (Moor frog)).